Here is a 379-residue protein sequence, read N- to C-terminus: DNA replication and repair protein RecF (379 aa).

ATP is bound at residue 30-37 (GKNAQGKT).

This sequence belongs to the RecF family.

It is found in the cytoplasm. Its function is as follows. The RecF protein is involved in DNA metabolism; it is required for DNA replication and normal SOS inducibility. RecF binds preferentially to single-stranded, linear DNA. It also seems to bind ATP. This chain is DNA replication and repair protein RecF, found in Ligilactobacillus salivarius (strain UCC118) (Lactobacillus salivarius).